The following is an 880-amino-acid chain: DNA-directed RNA polymerase subunit Rpo1N (880 aa).

Zn(2+) contacts are provided by C58, C61, C68, and H71. DsDNA contacts are provided by residues K88 and 92–95 (EFLK). The Zn(2+) site is built by C98 and C101. A dsDNA-binding site is contributed by K138. Positions 146 and 149 each coordinate Zn(2+). Residues K303, 305 to 310 (KEGRFR), R323, and Q422 contribute to the dsDNA site. Mg(2+)-binding residues include D456, D458, and D460. Residues R573, C575, C580, and H582 each coordinate Zn(2+). DsDNA is bound by residues 812-822 (RTSQSGYMQRR) and Q815.

Belongs to the RNA polymerase beta' chain family. In terms of assembly, part of the 13-subunit RNA polymerase complex. Rpo1N and Rpo5 form a cleft which docks Rpo13. Interacts with Rpo8 on the periphery of the clamp head. Requires Mg(2+) as cofactor. It depends on Zn(2+) as a cofactor.

It localises to the cytoplasm. It carries out the reaction RNA(n) + a ribonucleoside 5'-triphosphate = RNA(n+1) + diphosphate. DNA-dependent RNA polymerase (RNAP) catalyzes the transcription of DNA into RNA using the four ribonucleoside triphosphates as substrates. Forms the clamp head domain. The protein is DNA-directed RNA polymerase subunit Rpo1N of Saccharolobus shibatae (strain ATCC 51178 / DSM 5389 / JCM 8931 / NBRC 15437 / B12) (Sulfolobus shibatae).